Here is a 352-residue protein sequence, read N- to C-terminus: MRSLSGLLLLLTACLAVNASSVPTLPDDIQVQENFDLSRIYGKWFNVAVGSTCPWLKRFKEKMTMSTVVLIAGPTSKEISVTNTHRRKGVCESISGTYEKTSADGKFLYHKAKWNITMESYVVHTNYDEYAIFLTKKLSRRHGPTITVKLYGREPQLRESLLEEFREVALGVGIPEDAIFTMPDRGECVPGEQDPVPTPLSRARRAVLTQEEEGSGAGQPVTNFSKKADSCQLDYSQGPCLGLFKRYFYNGTSMACETFLYGGCMGNGNNFLSEKECLQTCRTVEACNLPIVQGPCRSYIQLWAFDAVKGKCVRFSYGGCKGNGNKFYSEKECKEYCGIPGEADEELLRFSN.

A signal peptide spans 1–19; sequence MRSLSGLLLLLTACLAVNA. Positions 53 and 111 each coordinate 3-hydroxy-L-kynurenine. C91 and C188 are disulfide-bonded. N-linked (GlcNAc...) asparagine glycosylation is present at N115. Positions 137 and 149 each coordinate 3-hydroxy-L-kynurenine. S215 carries O-linked (Xyl...) (chondroitin sulfate) serine glycosylation. N223 and N250 each carry an N-linked (GlcNAc...) asparagine glycan. Disulfide bonds link C231–C281, C240–C264, C256–C277, C287–C337, C296–C320, and C312–C333. BPTI/Kunitz inhibitor domains lie at 231-281 and 287-337; these read CQLD…LQTC and CNLP…KEYC.

In the N-terminal section; belongs to the calycin superfamily. Lipocalin family. In terms of assembly, monomer. Homodimer. In plasma, it occurs as a monomer or dimer and in covalently-linked complexes with immunoglobulin A (IgA), ALB/albumin and F2/prothrombin. Chromophore-bound alpha-1-microglobulin interacts with the constant region of immunoglobulin A. Chromophore-bound alpha-1-microglobulin interacts with ALB with molar ratio 2:1 and 1:1; this interaction does not prevent fatty acid binding to ALB. Interacts with F2/prothrombin (via N-terminus) with molar ratio 2:1 and 1:1; this interaction does not prevent the activation of prothrombin to thrombin. Interacts with NDUFAB1, a subunit of mitochondrial complex I. Interacts with FN1. As to quaternary structure, I-alpha-I plasma protease inhibitors are assembled from one or two heavy chains (HC) and one light chain, bikunin. Inter-alpha-inhibitor (I-alpha-I) is composed of ITIH1/HC1, ITIH2/HC2 and bikunin, and pre-alpha-inhibitor (P-alpha-I) of ITIH3/HC3 and bikunin. Interacts with TNFAIP6 (via Link domain). Monomer. Also occurs as a complex with tryptase in mast cells. The precursor is proteolytically processed into separately functioning proteins. In terms of processing, 3-hydroxykynurenine, an oxidized tryptophan metabolite that is common in biological fluids, reacts with Cys-53, Lys-111, Lys-137, and Lys-149 to form heterogeneous polycyclic chromophores including hydroxanthommatin. The reaction by alpha-1-microglobulin is autocatalytic; the human protein forms chromophore even when expressed in insect and bacterial cells. The chromophore can react with accessible cysteines forming non-reducible thioether cross-links with other molecules of alpha-1-microglobulin or with other proteins such as Ig alpha-1 chain C region 'Cys-352'. Post-translationally, heavy chains are interlinked with bikunin via a chondroitin 4-sulfate bridge to the C-terminal aspartate. Proteolytically cleaved by PRSS3 at Kunitz domain 2. As to expression, expressed by the liver and secreted in plasma.

The protein resides in the secreted. It is found in the endoplasmic reticulum. The protein localises to the cytoplasm. Its subcellular location is the cytosol. It localises to the cell membrane. The protein resides in the nucleus membrane. It is found in the mitochondrion inner membrane. The protein localises to the extracellular space. Its subcellular location is the extracellular matrix. In terms of biological role, antioxidant and tissue repair protein with reductase, heme-binding and radical-scavenging activities. Removes and protects against harmful oxidants and repairs macromolecules in intravascular and extravascular spaces and in intracellular compartments. Intravascularly, plays a regulatory role in red cell homeostasis by preventing heme- and reactive oxygen species-induced cell damage. Binds and degrades free heme to protect fetal and adult red blood cells from hemolysis. Reduces extracellular methemoglobin, a Fe3+ (ferric) form of hemoglobin that cannot bind oxygen, back to the Fe2+ (ferrous) form deoxyhemoglobin, which has oxygen-carrying potential. Upon acute inflammation, inhibits oxidation of low-density lipoprotein particles by MPO and limits vascular damage. Extravascularly, protects from oxidation products formed on extracellular matrix structures and cell membranes. Catalyzes the reduction of carbonyl groups on oxidized collagen fibers and preserves cellular and extracellular matrix ultrastructures. Importantly, counteracts the oxidative damage at blood-placenta interface, preventing leakage of free fetal hemoglobin into the maternal circulation. Intracellularly, has a role in maintaining mitochondrial redox homeostasis. Bound to complex I of the respiratory chain of mitochondria, may scavenge free radicals and preserve mitochondrial ATP synthesis. Protects renal tubule epithelial cells from heme-induced oxidative damage to mitochondria. Reduces cytochrome c from Fe3+ (ferric) to the Fe2+ (ferrous) state through formation of superoxide anion radicals in the presence of ascorbate or NADH/NADPH electron donor cofactors, ascorbate being the preferred cofactor. Has a chaperone role in facilitating the correct folding of bikunin in the endoplasmic reticulum compartment. Functionally, kunitz-type serine protease inhibitor and structural component of extracellular matrix with a role in extracellular space remodeling and cell adhesion. Among others, has antiprotease activity toward kallikrein, a protease involved in airway inflammation; inhibits GZMK/granzyme, a granule-stored serine protease involved in NK and T cell cytotoxic responses; and inhibits PLG/plasmin, a protease required for activation of matrix metalloproteinases. As part of I-alpha-I complex, provides for the heavy chains to be transferred from I-alpha-I complex to hyaluronan in the presence of TNFAIP6, in a dynamic process that releases free bikunin and remodels extracellular matrix proteoglycan structures. Free bikunin, but not its heavy chain-bound form, acts as a potent protease inhibitor in airway secretions. Part of hyaluronan-rich extracellular matrix that surrounds oocyte during cumulus oophorus expansion, an indispensable process for proper ovulation. Also inhibits calcium oxalate crystallization. Kunitz-type serine protease inhibitor. Has high catalytic efficiency for F10/blood coagulation factor Xa and may act as an anticoagulant by inhibiting prothrombin activation. Inhibits trypsin and mast cell CMA1/chymase and tryptase proteases. This Bos taurus (Bovine) protein is Protein AMBP (AMBP).